Here is a 553-residue protein sequence, read N- to C-terminus: CTP synthase (553 aa).

The tract at residues 1 to 266 (MTKNYIFITG…DNYICEYFKL (266 aa)) is amidoligase domain. S14 contributes to the CTP binding site. A UTP-binding site is contributed by S14. ATP-binding positions include 15 to 20 (SLGKGI) and D72. 2 residues coordinate Mg(2+): D72 and E140. Residues 147–149 (DIE), 187–192 (KTKPTQ), and K223 contribute to the CTP site. UTP contacts are provided by residues 187–192 (KTKPTQ) and K223. Position 239–241 (239–241 (KDV)) interacts with ATP. Positions 291–544 (IIGIIGKYIK…IKSAKKNKKN (254 aa)) constitute a Glutamine amidotransferase type-1 domain. L-glutamine is bound at residue G352. Residue C379 is the Nucleophile; for glutamine hydrolysis of the active site. L-glutamine-binding positions include 380 to 383 (LGMQ), E403, and R472. Catalysis depends on residues H517 and E519.

The protein belongs to the CTP synthase family. As to quaternary structure, homotetramer.

The enzyme catalyses UTP + L-glutamine + ATP + H2O = CTP + L-glutamate + ADP + phosphate + 2 H(+). It catalyses the reaction L-glutamine + H2O = L-glutamate + NH4(+). It carries out the reaction UTP + NH4(+) + ATP = CTP + ADP + phosphate + 2 H(+). It participates in pyrimidine metabolism; CTP biosynthesis via de novo pathway; CTP from UDP: step 2/2. With respect to regulation, allosterically activated by GTP, when glutamine is the substrate; GTP has no effect on the reaction when ammonia is the substrate. The allosteric effector GTP functions by stabilizing the protein conformation that binds the tetrahedral intermediate(s) formed during glutamine hydrolysis. Inhibited by the product CTP, via allosteric rather than competitive inhibition. Its function is as follows. Catalyzes the ATP-dependent amination of UTP to CTP with either L-glutamine or ammonia as the source of nitrogen. Regulates intracellular CTP levels through interactions with the four ribonucleotide triphosphates. In Buchnera aphidicola subsp. Schizaphis graminum (strain Sg), this protein is CTP synthase.